We begin with the raw amino-acid sequence, 736 residues long: Microtubule-associated protein mu-2 (736 aa).

Belongs to the orthoreovirus mu-2 protein family. Interacts with protein mu-NS; in viral inclusions. Interacts with polymerase lambda-3; this interaction stimulates the ATPase activity of mu-2. A divalent metal cation serves as cofactor.

Its subcellular location is the virion. The protein resides in the host cytoplasm. The protein localises to the host cytoskeleton. Its function is as follows. Minor inner capsid (core) component. Displays NTPase and RNA 5'-triphosphatase (RTPase) activities. ATP is the preferred substrate for hydrolysis. May function as a cofactor of polymerase lambda-3. Associates with microtubules and plays a role in the formation, structural organization and morphology of viral inclusions, where the assembly of cores and the replication of viral RNA occur. Together with mu-NS, recruits the other core proteins to these inclusions. This is Microtubule-associated protein mu-2 (M1) from Mammalia (T1L).